Consider the following 234-residue polypeptide: Sugar fermentation stimulation protein A (234 aa).

The segment at residues 201–220 is a DNA-binding region (H-T-H motif); that stretch reads LLSEAQQRGVEILAYKAEIS.

The protein belongs to the SfsA family.

In terms of biological role, binds to DNA non-specifically. Could be a regulatory factor involved in maltose metabolism. The sequence is that of Sugar fermentation stimulation protein A from Shigella flexneri serotype 5b (strain 8401).